A 1854-amino-acid chain; its full sequence is Protein virilizer (1854 aa).

Ser-186 carries the post-translational modification Phosphoserine. 2 stretches are compositionally biased toward basic and acidic residues: residues Tyr-202 to Met-214 and Thr-236 to Arg-259. 5 disordered regions span residues Tyr-202 to Gly-361, Asn-777 to Val-821, Thr-1570 to Cys-1589, Val-1720 to Ser-1788, and Ile-1804 to Arg-1854. Residues Ser-258, Ser-260, and Ser-276 each carry the phosphoserine modification. The segment covering Arg-275–Trp-285 has biased composition (basic and acidic residues). Residue Thr-288 is modified to Phosphothreonine. Phosphoserine is present on Ser-295. Position 297 is a phosphothreonine (Thr-297). A phosphoserine mark is found at Ser-301 and Ser-312. Composition is skewed to basic and acidic residues over residues His-325–Ser-343 and Asn-777–Glu-796. Residues Glu-779 to Lys-808 adopt a coiled-coil conformation. 2 stretches are compositionally biased toward low complexity: residues Ser-1738 to Ser-1748 and Ser-1816 to Ser-1838.

The protein belongs to the vir family. Component of the WMM complex, a N6-methyltransferase complex composed of a catalytic subcomplex, named MAC, and of an associated subcomplex, named MACOM. The MAC subcomplex is composed of Ime4/Mettl3 and Mettl14. The MACOM subcomplex is composed of fl(2)d, Flacc/Xio, Hakai, vir, and, in some cases of nito. Part of a complex containing fl(2)d, Sxl and vir.

It localises to the nucleus. Functionally, associated component of the WMM complex, a complex that mediates N6-methyladenosine (m6A) methylation of mRNAs, a modification that plays a role in the efficiency of mRNA splicing and is required for sex determination. Required for sex determination and dosage compensation via Sxl alternative splicing: m6A methylation acts as a key regulator of Sxl pre-mRNA and promotes female-specific alternative splicing of Sxl, which determines female physiognomy. M6A methylation is also required for neuronal functions. Required for proper inclusion of regulated exons in Ubx transcripts, leading to isoforms Ia/b and IIa/b. The polypeptide is Protein virilizer (Drosophila melanogaster (Fruit fly)).